The chain runs to 270 residues: F-actin-capping protein subunit beta (270 aa).

The span at 245–258 (QTRSQKSTTDSQEQ) shows a compositional bias: polar residues. A disordered region spans residues 245–270 (QTRSQKSTTDSQEQQQKEVIKGLQNL).

Belongs to the F-actin-capping protein beta subunit family. Component of the F-actin capping complex, composed of a heterodimer of an alpha and a beta subunit.

The protein resides in the cytoplasm. The protein localises to the cytoskeleton. Its subcellular location is the actin patch. Functionally, F-actin-capping proteins bind in a Ca(2+)-independent manner to the fast growing ends of actin filaments (barbed end) thereby blocking the exchange of subunits at these ends. Unlike other capping proteins (such as gelsolin and severin), these proteins do not sever actin filaments. This Candida glabrata (strain ATCC 2001 / BCRC 20586 / JCM 3761 / NBRC 0622 / NRRL Y-65 / CBS 138) (Yeast) protein is F-actin-capping protein subunit beta (CAP2).